The primary structure comprises 524 residues: 3-epi-6-deoxocathasterone 23-monooxygenase CYP90C1 (524 aa).

The chain crosses the membrane as a helical span at residues 25-45 (YLVAGFLVLTAGILLRPWLWL). C463 provides a ligand contact to heme.

Belongs to the cytochrome P450 family. Heme serves as cofactor. Widely expressed.

The protein resides in the endoplasmic reticulum membrane. The enzyme catalyses 3-epi-6-deoxocathasterone + reduced [NADPH--hemoprotein reductase] + O2 = 6-deoxotyphasterol + oxidized [NADPH--hemoprotein reductase] + H2O + H(+). It catalyses the reaction (22S,24R)-22-hydroxy-5alpha-ergostan-3-one + reduced [NADPH--hemoprotein reductase] + O2 = 3-dehydro-6-deoxoteasterone + oxidized [NADPH--hemoprotein reductase] + H2O + H(+). Its pathway is plant hormone biosynthesis; brassinosteroid biosynthesis. Involved in brassinosteroid (BR) biosynthesis. Converts typhasterol (TY) to cathasterone (CS) and 6-deoxotyphasterol (6-deoxoTY) to 6-deoxocathasterone (6-deoxoCT). C-23 hydroxylase that converts directly (22S,24R)-22-hydroxy-5-alpha-ergostan-3-one and 3-epi-6-deoxocathasterone to 3-dehydro-6-deoxoteasterone (6-deoxo3DT, 6-deoxo3DHT) and 6-deoxotyphasterol (6-deoxoTY), respectively. These C-23 hydroxylation shortcuts bypass campestanol, 6-deoxocathasterone, and 6-deoxoteasterone (6-deoxoTE). Also catalyzes the conversion of cathasterone to teasterone (TE), (22S,24R)-22-hydroxyergost-4-en-3-one (22-OH-4-en-3-one) to (22R,23R)-22,23-dihydroxy-campest-4-en-3-one (22,23-diOH-4-en-3-one) and (22S)-22-hydroxycampesterol (22-OHCR) to (22R,23R)-22,23-dihydroxycampesterol (22,23-diOHCR). Required for the regulation of polar elongation of leaf cells. Required for the longitudinal elongation of floral organs. The chain is 3-epi-6-deoxocathasterone 23-monooxygenase CYP90C1 from Arabidopsis thaliana (Mouse-ear cress).